The sequence spans 139 residues: MASQFELSVVSAEKEIFNGNVVSVRVTGIDGELGVYAGHTPLLTSIKPGMVKYTLEDGKEEFIYVSGGFLEVQPTIVTVLADVAIRGEELDQQRILAAKRKAEDTLSKSNNAELSAKLSREIAKLRVYEIVNSKLANRR.

The protein belongs to the ATPase epsilon chain family. As to quaternary structure, F-type ATPases have 2 components, CF(1) - the catalytic core - and CF(0) - the membrane proton channel. CF(1) has five subunits: alpha(3), beta(3), gamma(1), delta(1), epsilon(1). CF(0) has three main subunits: a, b and c.

It localises to the cell inner membrane. Its function is as follows. Produces ATP from ADP in the presence of a proton gradient across the membrane. This Actinobacillus pleuropneumoniae serotype 7 (strain AP76) protein is ATP synthase epsilon chain.